The following is a 1492-amino-acid chain: MIKHILQVEETKKIFEEIDDNEYEKIQDSRKNDDFIVDDDGYGYRDHGGEIWDRDGDVEEVGKKKKKKQNNHDPNENIMNYMMPASTLKKKSNAASTNPSAQQKPKVSVEQSRDIMNNLFQQLDAKDVDELEDVNEAKNMFVQEMNRPVAFNKEEDFNNRYSVTLESREEQERRRQSEQLKQQANIGQNQSDVNPFSKKRKLDEFQQVQANSYQSKQNSHSVSKSKPGDHEMANHADGVDLNLLAIDDTKMTDSHPSEIITQNQRASAVSSVNQQIMESTNGKNQLEKNDTEWQQMKEKNAVFNQDLRMNDNALMSNQQDYPLPLNEDGTLSFYWIDAHEENNGADLFVFGKIYQHEERKFVSCSIKVNGMQRELFVLPKMSGKSRAAMTTEEEKEQARKVMMELEGVRKRFPAITKWRCKPVTRKYAFELPIQHGEHQFVKIKYDATFPSLPSTVQGNTFECIFGANQSMLESFILKRKIRGPCWMTIRNPQKVTDFRRTWCKQEILVSNPKDIEITLDDLNKTELPPLTSVTFAIKTCRSSQNTNEIAMLSCIVNENISQEGPSKIDVHKSFTLLRKLDGKPMPIEYERAFRDKKDSFIQFFQHERQLIEAFVAKIYQLDPDLMVAHNLCGGMFDLLLARIQMLKISHWSRIGRLKKNQIPNKKSDQSGANYGGSQWIPRQVTCGRLLVDTFLTAKELIRETNYDLTHLAKVQLQKDRIDFDDDLLPTFYVQMAKLFQLIDHTEKDAYLTLQLMNHLQVIPLTKQLTNIAGNLWFRSLQNARAERNEMLLLHEFKKKKFVLPDKKQLNAKDLKKNMFADEYEEGDGKTKGGKRKKAAYAGGLVIEPKAGFYDNIILLLDFNSLYPSIIQEYNLCFTTVNRRPTKNFDGSEMKNQYKKGENGEEEVDIEEADLPDKNVNLKDAVLPMVLRDLVQKRKAVKDKMKTEKDHVKLSQLEIRQKAIKLTANSMYGCLGFGSSRFHAQAIAALITRTGRETLLRTKDIAENKLGFNVVYGDTDSIMINTGSNQLQQALEMGKRLKGEVNCLYKCLEIEIDGVFKSLLLLKKKKYAALKYENFLSPAEVKVVQEMKGLDMVRRDWCPLSKRVGRYVLDQILSGKQREEVVLNLNEFLSNIGNELKEGTIKLNEFIITKQITKAISDYNDIKGQPHVAVAKRLRDQGKSENQLVNNFIPYVICQQTYGDTTKSSTALSDKAYHPDEVISSRGKVTIDSDWYVSTQLLPPITRLIEHIEGIEVEFVAQCLGLDPKKYRYHSEKKNTDNPTDDPLIVSNPVLQTETERSLKNRTVAELNIKCPHCAHNYHFPGILVPSSNNTELTGLACVKCNQRIPDAYMLNRLNLFLKQLTALYYLGMKECKEPQCGMKTNQLLLNNKCIVKGCKGKMNSEYSELRINDTLRYLEGLFNVKKFLIENEKYRKKYEKPELVPNFQSFKELQKKVESFMIRSGYNKVDLGNIFGFMSKGANPHQQKMSIF.

Disordered stretches follow at residues 34-112 (DFIV…VEQS), 162-195 (SVTL…DVNP), and 210-234 (ANSY…EMAN). Residues 42–55 (YGYRDHGGEIWDRD) show a composition bias toward basic and acidic residues. Over residues 93 to 105 (NAASTNPSAQQKP) the composition is skewed to polar residues. A compositionally biased stretch (basic and acidic residues) spans 166–178 (ESREEQERRRQSE). 2 stretches are compositionally biased toward polar residues: residues 184 to 194 (ANIGQNQSDVN) and 210 to 224 (ANSY…SVSK). Cysteine 1314, cysteine 1317, cysteine 1341, cysteine 1344, cysteine 1375, cysteine 1380, cysteine 1393, and cysteine 1398 together coordinate Zn(2+). Residues 1314–1344 (CPHCAHNYHFPGILVPSSNNTELTGLACVKC) form a CysA-type zinc finger. Residues 1375–1398 (CKEPQCGMKTNQLLLNNKCIVKGC) carry the CysB motif motif.

This sequence belongs to the DNA polymerase type-B family.

The protein localises to the nucleus. The catalysed reaction is DNA(n) + a 2'-deoxyribonucleoside 5'-triphosphate = DNA(n+1) + diphosphate. Polymerase alpha in a complex with DNA primase is a replicative polymerase. The chain is DNA polymerase alpha catalytic subunit from Sterkiella nova (Ciliate).